Consider the following 200-residue polypeptide: TATA-box-binding protein (200 aa).

2 repeat units span residues 25-101 and 115-192.

This sequence belongs to the TBP family. As to quaternary structure, belongs to the TFIID complex together with the TBP-associated factors (TAFs). Binds DNA as monomer.

The protein localises to the nucleus. In terms of biological role, general transcription factor that functions at the core of the DNA-binding multiprotein factor TFIID. Binding of TFIID to the TATA box is the initial transcriptional step of the pre-initiation complex (PIC), playing a role in the activation of eukaryotic genes transcribed by RNA polymerase II. The protein is TATA-box-binding protein of Nicotiana tabacum (Common tobacco).